Here is a 445-residue protein sequence, read N- to C-terminus: Cytochrome b (445 aa).

The Cytoplasmic segment spans residues 2 to 49; sequence SGIPHDHYEPRTGIEKWLHSRLPIVALAYDTIMIPTPRNLNWMWIWGV. A helical transmembrane segment spans residues 50 to 67; it reads VLAFCLVLQIVTGIVLAM. Residues 68-94 lie on the Periplasmic side of the membrane; that stretch reads HYTPHVDLAFASVEHIMRNVNGGFMLR. A helical transmembrane segment spans residues 95-113; that stretch reads YLHANGASLFFIAVYLHIF. Positions 97 and 111 each coordinate heme b. Over 114 to 129 the chain is Cytoplasmic; sequence RGLYYGSYKAPREVTW. A helical membrane pass occupies residues 130 to 149; that stretch reads IVGMLIYLAMMATAFMGYVL. The Periplasmic segment spans residues 150–193; it reads PWGQMSFWGATVITGLFGAIPGIGHSIQTWLLGGPAVDNATLNR. A helical transmembrane segment spans residues 194–216; that stretch reads FFSLHYLLPFVIAALVAIHIWAF. Residues H198 and H212 each contribute to the heme b site. The Cytoplasmic segment spans residues 217 to 252; the sequence is HSTGNNNPTGVEVRRTSKAEAQKDTVPFWPYFIIKD. Residues 253 to 270 traverse the membrane as a helical segment; the sequence is VFALAVVLLVFFAIVGFM. Over 271 to 329 the chain is Periplasmic; that stretch reads PNYLGHPDNYIEANPLSTPAHIVPEWYFLPFYAILRAFTADVWVVQIANFISFGIIDAK. A helical membrane pass occupies residues 330–346; sequence FFGVLAMFGAILVMALV. Residues 347–364 are Cytoplasmic-facing; it reads PWLDTSPVRSGRYRPMFK. The helical transmembrane segment at 365–382 threads the bilayer; sequence IYFWLLAADFVILTWVGA. The Periplasmic portion of the chain corresponds to 383–388; the sequence is QQTTFP. Residues 389–408 traverse the membrane as a helical segment; that stretch reads YDWISLIASAYWFAYFLVIL. Over 409–445 the chain is Cytoplasmic; the sequence is PILGAIEKPVAPPATIEEDFNAHYSPATGGTKTVVAE.

This sequence belongs to the cytochrome b family. As to quaternary structure, the main subunits of complex b-c1 are: cytochrome b, cytochrome c1 and the Rieske protein. It depends on heme b as a cofactor.

The protein resides in the cell membrane. Component of the ubiquinol-cytochrome c reductase complex (complex III or cytochrome b-c1 complex), which is a respiratory chain that generates an electrochemical potential coupled to ATP synthesis. This Cereibacter sphaeroides (Rhodobacter sphaeroides) protein is Cytochrome b (petB).